Here is a 209-residue protein sequence, read N- to C-terminus: Orotate phosphoribosyltransferase (209 aa).

Residues arginine 96, lysine 100, histidine 102, and 122 to 130 (EDLISTGGS) each bind 5-phospho-alpha-D-ribose 1-diphosphate. Orotate is bound at residue serine 126.

The protein belongs to the purine/pyrimidine phosphoribosyltransferase family. PyrE subfamily. As to quaternary structure, homodimer. Mg(2+) serves as cofactor.

It carries out the reaction orotidine 5'-phosphate + diphosphate = orotate + 5-phospho-alpha-D-ribose 1-diphosphate. Its pathway is pyrimidine metabolism; UMP biosynthesis via de novo pathway; UMP from orotate: step 1/2. Catalyzes the transfer of a ribosyl phosphate group from 5-phosphoribose 1-diphosphate to orotate, leading to the formation of orotidine monophosphate (OMP). The protein is Orotate phosphoribosyltransferase of Listeria monocytogenes serovar 1/2a (strain ATCC BAA-679 / EGD-e).